Here is a 238-residue protein sequence, read N- to C-terminus: MKLPNEIDEYLASRNFSENTRSNYHYDLVSLQAFFEDKSLTTENLELYKIQISNLSPAAQRRKISSANQYLLFLYQRQKVDQYFKIKQVVQKKSQTAQSYHPMIKEFPEFYGPLTCPGQFLALLILEFGLNFAEIQKLKWENFNWNFKYLTIEKAGIKRVLPIREKFAIRVKAINNADELFAKSRQFLYTELKKFTNYSSKEIREQYILHQVKAGKSIYELATLLGLTTITTLEKYYR.

One can recognise a Core-binding (CB) domain in the interval 1–75 (MKLPNEIDEY…SANQYLLFLY (75 aa)). Residues 90-238 (VQKKSQTAQS…TITTLEKYYR (149 aa)) enclose the Tyr recombinase domain. Residues K154 and R204 contribute to the active site. The active-site O-(3'-phospho-DNA)-tyrosine intermediate is the Y236.

It belongs to the 'phage' integrase family. XerD-like subfamily.

It localises to the cytoplasm. Putative tyrosine recombinase. Not involved in the cutting and rejoining of the recombining DNA molecules on dif(SL) site. The sequence is that of Tyrosine recombinase XerD-like (ynbA) from Lactococcus lactis subsp. lactis (strain IL1403) (Streptococcus lactis).